The chain runs to 353 residues: Ferredoxin--NADP reductase 1 (353 aa).

T14, D33, Q41, Y46, A86, F121, D289, and T330 together coordinate FAD.

The protein belongs to the ferredoxin--NADP reductase type 2 family. In terms of assembly, homodimer. Requires FAD as cofactor.

The enzyme catalyses 2 reduced [2Fe-2S]-[ferredoxin] + NADP(+) + H(+) = 2 oxidized [2Fe-2S]-[ferredoxin] + NADPH. The chain is Ferredoxin--NADP reductase 1 from Christiangramia forsetii (strain DSM 17595 / CGMCC 1.15422 / KT0803) (Gramella forsetii).